The primary structure comprises 339 residues: Glycerol-3-phosphate dehydrogenase [NAD(P)+] (339 aa).

Residues Ser-11, Trp-12, and Lys-109 each contribute to the NADPH site. Sn-glycerol 3-phosphate contacts are provided by Lys-109, Gly-140, and Ser-142. Ala-144 provides a ligand contact to NADPH. Residues Lys-195, Asp-249, Ser-259, Arg-260, and Asn-261 each contribute to the sn-glycerol 3-phosphate site. The active-site Proton acceptor is Lys-195. Position 260 (Arg-260) interacts with NADPH. NADPH contacts are provided by Val-284 and Glu-286.

It belongs to the NAD-dependent glycerol-3-phosphate dehydrogenase family.

It localises to the cytoplasm. The catalysed reaction is sn-glycerol 3-phosphate + NAD(+) = dihydroxyacetone phosphate + NADH + H(+). The enzyme catalyses sn-glycerol 3-phosphate + NADP(+) = dihydroxyacetone phosphate + NADPH + H(+). It functions in the pathway membrane lipid metabolism; glycerophospholipid metabolism. Catalyzes the reduction of the glycolytic intermediate dihydroxyacetone phosphate (DHAP) to sn-glycerol 3-phosphate (G3P), the key precursor for phospholipid synthesis. This Lactobacillus johnsonii (strain CNCM I-12250 / La1 / NCC 533) protein is Glycerol-3-phosphate dehydrogenase [NAD(P)+].